The sequence spans 127 residues: Putative pre-16S rRNA nuclease (127 aa).

This sequence belongs to the YqgF nuclease family.

The protein localises to the cytoplasm. Could be a nuclease involved in processing of the 5'-end of pre-16S rRNA. This Campylobacter jejuni subsp. jejuni serotype O:23/36 (strain 81-176) protein is Putative pre-16S rRNA nuclease.